A 158-amino-acid chain; its full sequence is NAD(P)H-quinone oxidoreductase subunit J, chloroplastic (158 aa).

Belongs to the complex I 30 kDa subunit family. NDH is composed of at least 16 different subunits, 5 of which are encoded in the nucleus.

The protein resides in the plastid. Its subcellular location is the chloroplast thylakoid membrane. It carries out the reaction a plastoquinone + NADH + (n+1) H(+)(in) = a plastoquinol + NAD(+) + n H(+)(out). The enzyme catalyses a plastoquinone + NADPH + (n+1) H(+)(in) = a plastoquinol + NADP(+) + n H(+)(out). Its function is as follows. NDH shuttles electrons from NAD(P)H:plastoquinone, via FMN and iron-sulfur (Fe-S) centers, to quinones in the photosynthetic chain and possibly in a chloroplast respiratory chain. The immediate electron acceptor for the enzyme in this species is believed to be plastoquinone. Couples the redox reaction to proton translocation, and thus conserves the redox energy in a proton gradient. This chain is NAD(P)H-quinone oxidoreductase subunit J, chloroplastic, found in Olimarabidopsis pumila (Dwarf rocket).